A 504-amino-acid polypeptide reads, in one-letter code: Catalase (504 aa).

Positions 1-21 are cleaved as a signal peptide; sequence MQMSKSFLLITVGLASTSLQA. Residues His72 and Asn145 contribute to the active site. Tyr353 lines the heme pocket.

Belongs to the catalase family. The cofactor is heme.

Its subcellular location is the periplasm. It catalyses the reaction 2 H2O2 = O2 + 2 H2O. Its function is as follows. Decomposes hydrogen peroxide into water and oxygen; serves to protect cells from the toxic effects of hydrogen peroxide. This is Catalase from Vibrio parahaemolyticus serotype O3:K6 (strain RIMD 2210633).